The sequence spans 409 residues: Elongation factor Tu, chloroplastic (409 aa).

Positions 10 to 214 constitute a tr-type G domain; that stretch reads KPHVNIGTIG…AVDEYIPTPE (205 aa). The interval 19–26 is G1; that stretch reads GHVDHGKT. 19-26 provides a ligand contact to GTP; that stretch reads GHVDHGKT. Threonine 26 is a Mg(2+) binding site. The tract at residues 60 to 64 is G2; sequence GITIN. Positions 81-84 are G3; sequence DCPG. GTP contacts are provided by residues 81 to 85 and 136 to 139; these read DCPGH and NKED. The G4 stretch occupies residues 136–139; the sequence is NKED. The segment at 174–176 is G5; the sequence is SAL.

The protein belongs to the TRAFAC class translation factor GTPase superfamily. Classic translation factor GTPase family. EF-Tu/EF-1A subfamily.

It is found in the plastid. Its subcellular location is the chloroplast. It catalyses the reaction GTP + H2O = GDP + phosphate + H(+). GTP hydrolase that promotes the GTP-dependent binding of aminoacyl-tRNA to the A-site of ribosomes during protein biosynthesis. This is Elongation factor Tu, chloroplastic (tufA) from Phaeodactylum tricornutum (strain CCAP 1055/1).